A 761-amino-acid chain; its full sequence is RNA-binding protein 12B (761 aa).

Residues serine 98, serine 101, and serine 112 each carry the phosphoserine modification. A Glycyl lysine isopeptide (Lys-Gly) (interchain with G-Cter in SUMO2) cross-link involves residue lysine 114. The segment at 120-147 is disordered; the sequence is SGYGSSINQDAGFHSNGTGHGNLRPRKT. Lysine 151 is covalently cross-linked (Glycyl lysine isopeptide (Lys-Gly) (interchain with G-Cter in SUMO2)). Residues 155–230 enclose the RRM 1 domain; sequence PYLFLRGLPY…RFIEVMQGSE (76 aa). The span at 247–262 shows a compositional bias: basic and acidic residues; sequence LRRSEEHSPPRGINDR. The disordered stretch occupies residues 247–278; it reads LRRSEEHSPPRGINDRHFRKRSHSKSPRRTRS. Serine 250 and serine 254 each carry phosphoserine. The span at 263–278 shows a compositional bias: basic residues; that stretch reads HFRKRSHSKSPRRTRS. At threonine 276 the chain carries Phosphothreonine. A phosphoserine mark is found at serine 278, serine 280, serine 292, and serine 294. The 77-residue stretch at 284–360 folds into the RRM 2 domain; it reads FYVHLKNLSL…RPVHIDPISR (77 aa). Position 319 is an N6-acetyllysine (lysine 319). Residue lysine 335 forms a Glycyl lysine isopeptide (Lys-Gly) (interchain with G-Cter in SUMO2) linkage. Positions 372–384 are enriched in basic and acidic residues; that stretch reads KKRSGSPERDRPG. The disordered stretch occupies residues 372–392; sequence KKRSGSPERDRPGHVSQKYSQ. Serine 377 is subject to Phosphoserine. Residues 400–477 form the RRM 3 domain; that stretch reads LCIYIRNFPF…TEVLLRLISE (78 aa). Residues lysine 514 and lysine 541 each participate in a glycyl lysine isopeptide (Lys-Gly) (interchain with G-Cter in SUMO2) cross-link. The segment covering 538–621 has biased composition (basic and acidic residues); it reads DNFKHPQRDF…RHPREEDWRR (84 aa). The disordered stretch occupies residues 538–690; it reads DNFKHPQRDF…THQMKTSGAL (153 aa). Serine 575 and serine 591 each carry phosphoserine. Polar residues predominate over residues 627–654; that stretch reads LQSTSGGHPQSISGGHPQSISGARPRST. A compositionally biased stretch (low complexity) spans 661–672; sequence SISGGRLRSISG.

The sequence is that of RNA-binding protein 12B (RBM12B) from Pongo abelii (Sumatran orangutan).